Here is a 245-residue protein sequence, read N- to C-terminus: 8-amino-3,8-dideoxy-manno-octulosonate cytidylyltransferase (245 aa).

It belongs to the KdsB family.

The protein resides in the cytoplasm. The catalysed reaction is 8-amino-3,8-dideoxy-alpha-D-manno-octulosonate + CTP = CMP-8-amino-3,8-dideoxy-alpha-D-manno-oct-2-ulosonate + diphosphate. It participates in bacterial outer membrane biogenesis; lipopolysaccharide biosynthesis. Its function is as follows. Activates KDO8N (a required 8-carbon sugar) for incorporation into bacterial lipopolysaccharide in the Shewanella genus. This Shewanella oneidensis (strain ATCC 700550 / JCM 31522 / CIP 106686 / LMG 19005 / NCIMB 14063 / MR-1) protein is 8-amino-3,8-dideoxy-manno-octulosonate cytidylyltransferase.